Consider the following 533-residue polypeptide: Aspartic proteinase sxa1 (533 aa).

Positions Met1 to Ala23 are cleaved as a signal peptide. A Peptidase A1 domain is found at Tyr76–Ala434. Asn79 carries an N-linked (GlcNAc...) asparagine glycan. Residue Asp94 is part of the active site. N-linked (GlcNAc...) asparagine glycans are attached at residues Asn106, Asn138, Asn153, Asn166, Asn271, Asn278, Asn299, and Asn319. Residue Asp325 is part of the active site. An N-linked (GlcNAc...) asparagine glycan is attached at Asn439.

This sequence belongs to the peptidase A1 family.

In terms of biological role, involved in degradation or processing of the mating pheromones. Its loss may cause a persistent response to the pheromones. It may cleave the mating pheromone M-factor. May be involved in processing of zymogens that are required for zygote formation. The protein is Aspartic proteinase sxa1 (sxa1) of Schizosaccharomyces pombe (strain 972 / ATCC 24843) (Fission yeast).